Here is a 1153-residue protein sequence, read N- to C-terminus: Error-prone DNA polymerase (1153 aa).

A disordered region spans residues 1107 to 1153 (DELIAPSASTEREAPLNDDRRDHPDLPAQQIRHPRNVRILPPSRDFH). Over residues 1116–1131 (TEREAPLNDDRRDHPD) the composition is skewed to basic and acidic residues.

This sequence belongs to the DNA polymerase type-C family. DnaE2 subfamily.

It localises to the cytoplasm. The enzyme catalyses DNA(n) + a 2'-deoxyribonucleoside 5'-triphosphate = DNA(n+1) + diphosphate. In terms of biological role, DNA polymerase involved in damage-induced mutagenesis and translesion synthesis (TLS). It is not the major replicative DNA polymerase. The polypeptide is Error-prone DNA polymerase (Rhodopseudomonas palustris (strain BisA53)).